Here is a 400-residue protein sequence, read N- to C-terminus: Acetate kinase (400 aa).

Residue Asn7 participates in Mg(2+) binding. Lys14 contacts ATP. Residue Arg91 participates in substrate binding. Asp148 functions as the Proton donor/acceptor in the catalytic mechanism. Residues 208–212, 283–285, and 331–335 each bind ATP; these read HVGNG, DMR, and GVGEN. Glu385 lines the Mg(2+) pocket.

It belongs to the acetokinase family. As to quaternary structure, homodimer. Mg(2+) serves as cofactor. Mn(2+) is required as a cofactor.

The protein localises to the cytoplasm. The catalysed reaction is acetate + ATP = acetyl phosphate + ADP. It functions in the pathway metabolic intermediate biosynthesis; acetyl-CoA biosynthesis; acetyl-CoA from acetate: step 1/2. Functionally, catalyzes the formation of acetyl phosphate from acetate and ATP. Can also catalyze the reverse reaction. In Parabacteroides distasonis (strain ATCC 8503 / DSM 20701 / CIP 104284 / JCM 5825 / NCTC 11152), this protein is Acetate kinase.